The primary structure comprises 727 residues: DNA topoisomerase 3 (727 aa).

Residues 3–136 (KTVVLAEKPS…LKRLWISSVT (134 aa)) enclose the Toprim domain. Mg(2+) is bound by residues Glu-9 and Asp-105. Residues 153-592 (FENLYHSAVA…EMKEYAKQTI (440 aa)) form the Topo IA-type catalytic domain. Positions 187 to 192 (SCGRVQ) are interaction with DNA. The active-site O-(5'-phospho-DNA)-tyrosine intermediate is Tyr-310. Positions 685 to 711 (RRAKDKNSKASKRDVHSYMKKQNKDEP) are enriched in basic and acidic residues. A disordered region spans residues 685-713 (RRAKDKNSKASKRDVHSYMKKQNKDEPIN).

Belongs to the type IA topoisomerase family. Mg(2+) is required as a cofactor.

It catalyses the reaction ATP-independent breakage of single-stranded DNA, followed by passage and rejoining.. Releases the supercoiling and torsional tension of DNA, which is introduced during the DNA replication and transcription, by transiently cleaving and rejoining one strand of the DNA duplex. Introduces a single-strand break via transesterification at a target site in duplex DNA. The scissile phosphodiester is attacked by the catalytic tyrosine of the enzyme, resulting in the formation of a DNA-(5'-phosphotyrosyl)-enzyme intermediate and the expulsion of a 3'-OH DNA strand. The free DNA strand then undergoes passage around the unbroken strand, thus removing DNA supercoils. Finally, in the religation step, the DNA 3'-OH attacks the covalent intermediate to expel the active-site tyrosine and restore the DNA phosphodiester backbone. In Bacillus licheniformis (strain ATCC 14580 / DSM 13 / JCM 2505 / CCUG 7422 / NBRC 12200 / NCIMB 9375 / NCTC 10341 / NRRL NRS-1264 / Gibson 46), this protein is DNA topoisomerase 3.